We begin with the raw amino-acid sequence, 60 residues long: Metallothionein B (60 aa).

Residues 1 to 28 (MDPCDCSKSGTCNCGGSCTCTNCSCTSC) are beta. Residues C4, C6, C12, C14, C18, C20, C23, C25, C28, C32, C33, C35, C36, C40, C43, C47, C49, C54, C58, and C59 each contribute to the a divalent metal cation site. The segment at 29–60 (KKSCCPCCPSGCTKCASGCVCKGKTCDTSCCQ) is alpha.

The protein belongs to the metallothionein superfamily. Type 1 family.

Functionally, metallothioneins have a high content of cysteine residues that bind various heavy metals. This chain is Metallothionein B (mtb), found in Chionodraco hamatus (Antarctic teleost icefish).